Consider the following 143-residue polypeptide: UPF0651 protein P31B10.02, mitochondrial (143 aa).

Residues 48–93 (IYDGIRVPPKPEEPLNCCQSGCAICVWDVYADDLEEYNRARRKAKR) enclose the Oxidoreductase-like domain.

It belongs to the UPF0651 family.

The protein resides in the mitochondrion. This Schizosaccharomyces pombe (strain 972 / ATCC 24843) (Fission yeast) protein is UPF0651 protein P31B10.02, mitochondrial.